The chain runs to 190 residues: MARPFAFLMVLVVISYWSTCSLGCDLPQTHNLRNKKILTLLAQMRRLSPLSCLKDRKDFGFPQEKVDAQQIQEAQAIPVLSELTQQILTLFTSKDSSAAWNATLLDSFCTGLHQLLNDLQGCLMQLVGMKELPLTQEDSQLAMKKYFHRITVYLREKKHSPCAWEVVRAEVWRALSSSVNLLARLSEEKE.

The signal sequence occupies residues Met-1 to Gly-23. Cystine bridges form between Cys-24–Cys-122 and Cys-52–Cys-162. Asn-101 carries N-linked (GlcNAc...) asparagine glycosylation.

Belongs to the alpha/beta interferon family.

The protein resides in the secreted. Functionally, produced by macrophages, IFN-alpha have antiviral activities. Interferon stimulates the production of two enzymes: a protein kinase and an oligoadenylate synthetase. The chain is Interferon alpha-9 (Ifna9) from Mus musculus (Mouse).